The chain runs to 364 residues: Acidic fibroblast growth factor intracellular-binding protein (364 aa).

Residue Thr2 is modified to N-acetylthreonine.

As to quaternary structure, binds to internalized FGF1; this interaction is increased in the presence of CSNKB, suggesting a possible cooperative interaction between CSNKB and FIBP in binding to FGF1. Highly expressed in heart, skeletal muscle and pancreas. Expressed at lower levels in brain. Also found in placenta, liver and kidney.

It localises to the nucleus. Its subcellular location is the endomembrane system. In terms of biological role, may be involved in mitogenic function of FGF1. May mediate with IER2 FGF-signaling in the establishment of laterality in the embryo. The chain is Acidic fibroblast growth factor intracellular-binding protein (FIBP) from Homo sapiens (Human).